A 469-amino-acid chain; its full sequence is RuvB-like helicase 2 (469 aa).

76-83 (GPPSTGKT) provides a ligand contact to ATP.

This sequence belongs to the RuvB family. May form heterododecamers with RVB1. Component of the SWR1 chromatin remodeling complex, the INO80 chromatin remodeling complex, and of the R2TP complex.

Its subcellular location is the nucleus. It catalyses the reaction ATP + H2O = ADP + phosphate + H(+). In terms of biological role, DNA helicase which participates in several chromatin remodeling complexes, including the SWR1 and the INO80 complexes. The SWR1 complex mediates the ATP-dependent exchange of histone H2A for the H2A variant HZT1 leading to transcriptional regulation of selected genes by chromatin remodeling. The INO80 complex remodels chromatin by shifting nucleosomes and is involved in DNA repair. Also involved in pre-rRNA processing. In Aspergillus fumigatus (strain ATCC MYA-4609 / CBS 101355 / FGSC A1100 / Af293) (Neosartorya fumigata), this protein is RuvB-like helicase 2 (rvb2).